Reading from the N-terminus, the 332-residue chain is Malate dehydrogenase (332 aa).

NAD(+) contacts are provided by residues 11-16 (GAGNVG) and Asp35. The substrate site is built by Arg97 and Arg103. NAD(+)-binding positions include Asn110 and 133 to 135 (VTN). Substrate-binding residues include Asn135 and Arg166. His190 functions as the Proton acceptor in the catalytic mechanism.

Belongs to the LDH/MDH superfamily. MDH type 3 family.

It catalyses the reaction (S)-malate + NAD(+) = oxaloacetate + NADH + H(+). Catalyzes the reversible oxidation of malate to oxaloacetate. The polypeptide is Malate dehydrogenase (Hydrogenobaculum sp. (strain Y04AAS1)).